A 340-amino-acid polypeptide reads, in one-letter code: Chitinase 7 (340 aa).

An N-terminal signal peptide occupies residues 1–32 (MIAARAANLQVAMKALALAVLALAYAAATARA). Residues 33-73 (EQCGRQAGGARCPNRLCCSRWGWCGLTDDYCKGGCQSQCRV) enclose the Chitin-binding type-1 domain. 7 disulfides stabilise this stretch: cysteine 35-cysteine 50, cysteine 44-cysteine 56, cysteine 49-cysteine 63, cysteine 67-cysteine 71, cysteine 118-cysteine 173, cysteine 185-cysteine 193, and cysteine 293-cysteine 323.

It belongs to the glycosyl hydrolase 19 family. Chitinase class I subfamily. In terms of tissue distribution, expressed in pistils, stamens and lodicules.

The enzyme catalyses Random endo-hydrolysis of N-acetyl-beta-D-glucosaminide (1-&gt;4)-beta-linkages in chitin and chitodextrins.. In terms of biological role, hydrolyzes chitin and may play a role in defense against fungal pathogens containing chitin. The chain is Chitinase 7 (Cht7) from Oryza sativa subsp. japonica (Rice).